Reading from the N-terminus, the 383-residue chain is Acyl-CoA dehydrogenase, short-chain specific (383 aa).

Glutamate 367 functions as the Proton acceptor in the catalytic mechanism.

Belongs to the acyl-CoA dehydrogenase family. Homotetramer. Requires FAD as cofactor.

The catalysed reaction is butanoyl-CoA + oxidized [electron-transfer flavoprotein] + H(+) = (2E)-butenoyl-CoA + reduced [electron-transfer flavoprotein]. The enzyme catalyses a short-chain 2,3-saturated fatty acyl-CoA + oxidized [electron-transfer flavoprotein] + H(+) = a short-chain (2E)-enoyl-CoA + reduced [electron-transfer flavoprotein]. Its function is as follows. Has an optimum specificity for 4-carbon length fatty acyl-CoAs. The chain is Acyl-CoA dehydrogenase, short-chain specific from Megasphaera elsdenii.